We begin with the raw amino-acid sequence, 3102 residues long: Laminin subunit alpha lam-3 (3102 aa).

Residues 1–16 form the signal peptide; that stretch reads MRLWLGLLAVSNIALG. N-linked (GlcNAc...) asparagine glycosylation is found at N19, N135, and N237. Residues 44 to 295 enclose the Laminin N-terminal domain; that stretch reads SERGLFPNIF…SISDISIGGQ (252 aa). 16 disulfides stabilise this stretch: C296–C305, C298–C316, C318–C327, C330–C350, C353–C362, C355–C387, C390–C399, C402–C420, C423–C435, C425–C451, C453–C462, C465–C475, C478–C491, C480–C496, C498–C507, and C510–C525. 4 Laminin EGF-like domains span residues 296–352, 353–422, 423–477, and 478–527; these read CICY…VCQQ, CQCF…ACRT, CECD…TCEP, and CPCN…GCQP. Residues 548-740 form the Laminin IV type A 1 domain; that stretch reads INNIGWHLTD…QDTLMGGVEV (193 aa). 31 disulfides stabilise this stretch: C774/C783, C776/C790, C793/C802, C805/C822, C825/C838, C827/C858, C861/C870, C873/C886, C889/C903, C891/C910, C913/C922, C925/C938, C941/C953, C943/C960, C962/C971, C974/C985, C988/C1000, C990/C1007, C1009/C1018, C1021/C1033, C1036/C1049, C1038/C1056, C1058/C1067, C1070/C1083, C1086/C1098, C1088/C1105, C1107/C1116, C1119/C1131, C1134/C1144, C1137/C1151, and C1153/C1162. Laminin EGF-like domains lie at 774–824, 825–888, 889–940, 941–987, 988–1035, 1036–1085, 1086–1133, 1134–1180, 1181–1226, and 1227–1283; these read CDCH…ACEQ, CECP…KCIE, CTCN…TCKP, CGCH…GCPA, CDCN…GCQF, CHCN…GCED, CGCD…GCTE, CEPC…GCKL, CDCS…TCEP, and CGCN…GCTE. N796 carries an N-linked (GlcNAc...) asparagine glycan. A glycan (N-linked (GlcNAc...) asparagine) is linked at N991. N1027 carries an N-linked (GlcNAc...) asparagine glycan. The N-linked (GlcNAc...) asparagine glycan is linked to N1076. N-linked (GlcNAc...) asparagine glycosylation occurs at N1164. 9 disulfide bridges follow: C1165-C1178, C1181-C1193, C1183-C1200, C1202-C1211, C1214-C1224, C1227-C1246, C1229-C1252, C1254-C1263, and C1266-C1281. N-linked (GlcNAc...) asparagine glycosylation occurs at N1288. The Laminin IV type A 2 domain occupies 1295-1496; it reads QSDLVWQQMY…STTKAIGVEK (202 aa). Cystine bridges form between C1540–C1549, C1542–C1556, C1559–C1568, C1571–C1587, C1590–C1603, C1592–C1614, C1617–C1626, C1629–C1644, C1647–C1659, C1649–C1666, C1668–C1677, and C1680–C1691. Laminin EGF-like domains follow at residues 1540–1589, 1590–1646, and 1647–1693; these read CSCH…ACTK, CACP…TCSP, and CDCH…VCTS. N1717, N1734, N1777, N1806, N1839, N1875, N1969, N1984, and N2048 each carry an N-linked (GlcNAc...) asparagine glycan. The interval 2061-2084 is disordered; sequence EAVSKMLGSEGSESGDANEESLRS. 4 N-linked (GlcNAc...) asparagine glycosylation sites follow: N2091, N2193, N2369, and N2479. 3 consecutive Laminin G-like domains span residues 2467–2644, 2652–2839, and 2913–3088; these read SQRG…TDGC, DKII…IGMC, and RYGL…AKAC. C2617 and C2644 are oxidised to a cystine. Residues N2672 and N2686 are each glycosylated (N-linked (GlcNAc...) asparagine). A disulfide bridge connects residues C2814 and C2839. 3 N-linked (GlcNAc...) asparagine glycosylation sites follow: N2932, N2959, and N3007. C3058 and C3088 are oxidised to a cystine.

In terms of assembly, laminin is a complex glycoprotein, consisting of three different polypeptide chains (alpha, beta, gamma), which are bound to each other by disulfide bonds into a cross-shaped molecule comprising one long and three short arms with globules at each end.

It localises to the secreted. Its subcellular location is the extracellular space. The protein resides in the extracellular matrix. It is found in the basement membrane. Its function is as follows. Binding to cells via a high affinity receptor, laminin is thought to mediate the attachment, migration and organization of cells into tissues during embryonic development by interacting with other extracellular matrix components. Required to assemble a stable basement membrane and for organizing receptor complexes and cytoskeletal components to the proper cell surfaces. During embryogenesis, does not require the presence of collagen type IV in order to associate with cell surfaces, prior to assembly of the prototypical basement membrane. Plays an important role in muscle contraction of the body. Probably plays a distinct role from the related laminin subunit alpha epi-1. The chain is Laminin subunit alpha lam-3 from Caenorhabditis elegans.